Reading from the N-terminus, the 368-residue chain is MAAASEERMAEEGGGGHGDGGSPSAIASTQRLPPPPPPQPPQPGSQAPPAPALAPDQLPQNNTLVALPIVAIENILSFMSYDEISQLRLVCKRMDLVCQRMLNQGFLKVERYHNLCQKQVKAQLPRRESERRNHSLARHADILAAVETRLSLLNMTFMKYVDSNLCCFIPGKVIDEIYRVLRYVNSTRAPQRAHEVLQELRDISSMAMEYFDEKIVPILKRKLPGSDVSGRLMGSPPVPGPSAALTTMQLFSKQNPSRQEVTKLQQQVKTNGAGVTVLRREISELRTKVQEQQKQLQDQDQKLLEQTQIIGEQNARLAELERKLREVMESAVGNSSGSGQSEESPRKRKKAAEAIDSLRKSKRLRNRK.

Positions 1–11 are enriched in basic and acidic residues; that stretch reads MAAASEERMAE. The interval 1–57 is disordered; the sequence is MAAASEERMAEEGGGGHGDGGSPSAIASTQRLPPPPPPQPPQPGSQAPPAPALAPDQ. Residues 12–21 show a composition bias toward gly residues; that stretch reads EGGGGHGDGG. The span at 32–52 shows a compositional bias: pro residues; that stretch reads LPPPPPPQPPQPGSQAPPAPA. An F-box domain is found at 61–109; that stretch reads NNTLVALPIVAIENILSFMSYDEISQLRLVCKRMDLVCQRMLNQGFLKV. Residues S235 and S242 each carry the phosphoserine modification. T270 carries the post-translational modification Phosphothreonine. The disordered stretch occupies residues 328 to 368; sequence MESAVGNSSGSGQSEESPRKRKKAAEAIDSLRKSKRLRNRK. S344 carries the phosphoserine modification.

Part of a SCF (SKP1-cullin-F-box) protein ligase complex.

Its subcellular location is the chromosome. It is found in the centromere. The protein localises to the kinetochore. Functionally, probably recognizes and binds to some phosphorylated proteins and promotes their ubiquitination and degradation. The polypeptide is F-box only protein 28 (FBXO28) (Bos taurus (Bovine)).